Here is a 509-residue protein sequence, read N- to C-terminus: Cobyric acid synthase (509 aa).

Residues 262 to 459 form the GATase cobBQ-type domain; that stretch reads EIKVGIIKLP…IHGIFENDIW (198 aa). Cysteine 343 serves as the catalytic Nucleophile. Histidine 451 is an active-site residue.

This sequence belongs to the CobB/CobQ family. CobQ subfamily.

The protein operates within cofactor biosynthesis; adenosylcobalamin biosynthesis. Functionally, catalyzes amidations at positions B, D, E, and G on adenosylcobyrinic A,C-diamide. NH(2) groups are provided by glutamine, and one molecule of ATP is hydrogenolyzed for each amidation. In Prochlorococcus marinus (strain MIT 9312), this protein is Cobyric acid synthase.